A 305-amino-acid chain; its full sequence is Probable 5-dehydro-4-deoxyglucarate dehydratase (305 aa).

It belongs to the DapA family.

The enzyme catalyses 5-dehydro-4-deoxy-D-glucarate + H(+) = 2,5-dioxopentanoate + CO2 + H2O. It participates in carbohydrate acid metabolism; D-glucarate degradation; 2,5-dioxopentanoate from D-glucarate: step 2/2. The chain is Probable 5-dehydro-4-deoxyglucarate dehydratase from Xanthomonas campestris pv. campestris (strain B100).